Consider the following 708-residue polypeptide: MEMACRVINRRRHVGLQQLLSFAQTGRSFLGPVKATKFITDAECHESVLISSTVRLLEGLDLTCAVGHLLNEAVQAQNNTYKIGTSTLLFLVGAWSRAVEDCLHLGIPTTVIVSVMSEGLNSCIEAVVSLQVPIHNVFDHMDNTSTVYKLETVNATLCPFLQDPSGSGLLQEKRDFKDATSPLLSTYSLSGRHAESPKFFKPQNNLETEKNTLQVLKNNLYTDSFCKKSALAHSRHFNRTDNSHWISRHDGFLEQLESTPKVLRCNDFGELAVGLSHGDHSSMALAKAAVRLQWQSLCLQQANWMAPFMFDISRLLTCCIPGLPETFSRVGLGYVTFVTMSSITLIKELQDQPFRVILIEGDLTESYRHLGFNKSVNIKTKLDSGELSEDSAEELWTNHVLQVLIQFNVTLILVQGSVSEHLTEKCMHSKRLVIGAVNGSVLQAFAEATRAVPVAYVTQVNEDCVGSGVSVTFWMSPHDINRSNRIAILLTAEGINLITAVLTSPASAQMETKEDRFWSCVYRLYHALKEEKVFLGGGAVEFLCLSHLQILAEQSLNRGNHACLGWLPDSSSWMASSLSVYRPTVLKSLAGGWHEFLSAIMCNTATHPSAVEARTFIQQHVQNAIDSGSPSSYILSEYSKLSSGVFHSGISDNLELVPRVYDTVTPKIEAWRRALDVVLLVLQTDSEIITGLVHTEMNSQELDGVLFL.

It belongs to the TCP-1 chaperonin family. BBS12 subfamily. In terms of assembly, component of the chaperonin-containing T-complex (TRiC), a heterooligomeric complex of about 850 to 900 kDa that forms two stacked rings, 12 to 16 nm in diameter. Interacts with MKKS.

The protein localises to the cell projection. It localises to the cilium. Functionally, component of the chaperonin-containing T-complex (TRiC), a molecular chaperone complex that assists the folding of proteins upon ATP hydrolysis. As part of the TRiC complex may play a role in the assembly of BBSome, a complex involved in ciliogenesis regulating transports vesicles to the cilia. Involved in adipogenic differentiation. In Mus musculus (Mouse), this protein is Chaperonin-containing T-complex member BBS12 (Bbs12).